We begin with the raw amino-acid sequence, 683 residues long: Methionine--tRNA ligase (683 aa).

Residues 15–25 (PYANGPIHLGH) carry the 'HIGH' region motif. Cys-146, Cys-149, Cys-159, and Cys-162 together coordinate Zn(2+). A 'KMSKS' region motif is present at residues 332–336 (KMSKS). Lys-335 is a binding site for ATP. In terms of domain architecture, tRNA-binding spans 581–683 (DFFKVDLRVA…AGAKAGQRVK (103 aa)).

Belongs to the class-I aminoacyl-tRNA synthetase family. MetG type 1 subfamily. Homodimer. Zn(2+) is required as a cofactor.

It is found in the cytoplasm. It catalyses the reaction tRNA(Met) + L-methionine + ATP = L-methionyl-tRNA(Met) + AMP + diphosphate. Functionally, is required not only for elongation of protein synthesis but also for the initiation of all mRNA translation through initiator tRNA(fMet) aminoacylation. This chain is Methionine--tRNA ligase, found in Histophilus somni (strain 129Pt) (Haemophilus somnus).